The sequence spans 725 residues: ATP-dependent DNA helicase II subunit 2 (725 aa).

Positions 232 to 478 (LTLGDPQKYP…QQAMSDYVDA (247 aa)) constitute a Ku domain.

This sequence belongs to the ku80 family. Heterodimer of mus-51/ku70 and mus-52/ku80.

The protein localises to the nucleus. It is found in the chromosome. Its subcellular location is the telomere. The enzyme catalyses ATP + H2O = ADP + phosphate + H(+). Single-stranded DNA-dependent ATP-dependent helicase. Involved in non-homologous end joining (NHEJ) DNA double strand break repair. DNA-binding is sequence-independent but has a high affinity to nicks in double-stranded DNA and to the ends of duplex DNA. Binds to naturally occurring chromosomal ends, and therefore provides chromosomal end protection. Required also for telomere recombination to repair telomeric ends in the absence of telomerase. ku70, of the ku70/ku80 heterodimer, binds to the stem loop of tlc1, the RNA component of telomerase. Involved in telomere maintenance. Interacts with telomeric repeats and subtelomeric sequences thereby controlling telomere length and protecting against subtelomeric rearrangement. Maintains telomeric chromatin, which is involved in silencing the expression of genes located at the telomere. Required for mating-type switching. This is ATP-dependent DNA helicase II subunit 2 (mus-52) from Neurospora crassa (strain ATCC 24698 / 74-OR23-1A / CBS 708.71 / DSM 1257 / FGSC 987).